Here is a 199-residue protein sequence, read N- to C-terminus: Single-stranded DNA cytosine deaminase (199 aa).

The Bipartite nuclear localization signal signature appears at 1–30; that stretch reads MDSLLKKQRQFLYQFKNVRWAKGRHETYLC. The tract at residues 2–26 is interaction with SUPT6H; sequence DSLLKKQRQFLYQFKNVRWAKGRHE. The CMP/dCMP-type deaminase domain maps to 23 to 130; sequence GRHETYLCYV…KAEPEGLRRL (108 aa). Residue T27 is modified to Phosphothreonine; by PKA. A Phosphoserine; by PKA modification is found at S38. The interval 39 to 42 is important for interaction with CTNNBL1; sequence PTSF. Residue H56 participates in Zn(2+) binding. The active-site Proton donor is the E58. The Zn(2+) site is built by C87 and C90. The tract at residues 88–116 is required for interaction with RNF126; sequence YDCARHVADFLRGYPNLSLRIFTARLYFC. The Nuclear export signal motif lies at 184–199; the sequence is LYEVDDLRDAFRTLGL.

The protein belongs to the cytidine and deoxycytidylate deaminase family. In terms of assembly, interacts with CTNNBL1; the interaction is important for the immunoglobulin switch activity of AICDA. Interacts (via its NLS) with KPNA1. Interacts with PKA/PRKACA and PRKAR1A/PKR1. Interacts with SUPT6H, TRIM28 and NCL. Directly interacts with MCM3AP; this interaction may favor AICDA recruitment to immunoglobulin variable region genes, hence promoting somatic hypermutations. It depends on Zn(2+) as a cofactor. In terms of processing, ser-38 is the major site whereas Thr-27 is the minor site of phosphorylation. Phosphorylation regulates its class-switch recombination activity. Probably monoubiquitinated on several residues by RNF126. In terms of tissue distribution, expressed in lymph nodes, spleen and thymus.

The protein localises to the nucleus. It is found in the cytoplasm. It catalyses the reaction a 2'-deoxycytidine in single-stranded DNA + H2O + H(+) = a 2'-deoxyuridine in single-stranded DNA + NH4(+). Functionally, single-stranded DNA-specific cytidine deaminase. Involved in somatic hypermutation (SHM), gene conversion, and class-switch recombination (CSR) in B-lymphocytes by deaminating C to U during transcription of Ig-variable (V) and Ig-switch (S) region DNA. Required for several crucial steps of B-cell terminal differentiation necessary for efficient antibody responses. May also play a role in the epigenetic regulation of gene expression by participating in DNA demethylation. The protein is Single-stranded DNA cytosine deaminase (AICDA) of Bos taurus (Bovine).